Consider the following 723-residue polypeptide: Nuclear hormone receptor HR96 (723 aa).

The segment at residues 4–79 is a DNA-binding region (nuclear receptor); sequence PKNCAVCGDK…IGMKSENIMS (76 aa). NR C4-type zinc fingers lie at residues 7–27 and 43–67; these read CAVC…CESC and CPFN…LRKC. The segment at 95–163 is disordered; that stretch reads AKRRLMENGT…QASSPGTQVN (69 aa). 2 stretches are compositionally biased toward polar residues: residues 122-142 and 151-163; these read DSSS…SCGS and SGRQ…TQVN. One can recognise an NR LBD domain in the interval 483–723; the sequence is EQMKLRELRL…LREIFDLKNH (241 aa).

It belongs to the nuclear hormone receptor family. NR1 subfamily.

Its subcellular location is the nucleus. Its function is as follows. Binds selectively to the HSP27 20E response element. The polypeptide is Nuclear hormone receptor HR96 (Hr96) (Drosophila melanogaster (Fruit fly)).